The sequence spans 404 residues: G1/S-specific cyclin-E2 (404 aa).

A disordered region spans residues 1–45 (MSRRSSRLQAKQQPQASQTDSPQEAQIIQAKKRKTAQDVKKRKEE). Residues 7-26 (RLQAKQQPQASQTDSPQEAQ) are compositionally biased toward polar residues. A Phosphoserine modification is found at serine 21. Positions 35–45 (TAQDVKKRKEE) are enriched in basic and acidic residues. Lysine 348 is subject to N6-lactoyllysine. Serine 383 bears the Phosphoserine mark. The residue at position 392 (threonine 392) is a Phosphothreonine.

Belongs to the cyclin family. Cyclin E subfamily. In terms of assembly, interacts with the CDK2 (in vivo) and CDK3 (in vitro) protein kinases to form a serine/threonine kinase holoenzyme complex. The cyclin subunit imparts substrate specificity to the complex. Post-translationally, phosphorylation by CDK2 triggers its release from CDK2 and degradation via the ubiquitin proteasome pathway. Lactylated at Lys-348. Delactylated by SIRT3.

The protein localises to the nucleus. Its function is as follows. Essential for the control of the cell cycle at the late G1 and early S phase. The polypeptide is G1/S-specific cyclin-E2 (CCNE2) (Bos taurus (Bovine)).